The chain runs to 755 residues: Catalase-peroxidase (755 aa).

A cross-link (tryptophyl-tyrosyl-methioninium (Trp-Tyr) (with M-267)) is located at residues Trp-93–Tyr-241. His-94 serves as the catalytic Proton acceptor. A cross-link (tryptophyl-tyrosyl-methioninium (Tyr-Met) (with W-93)) is located at residues Tyr-241–Met-267. His-282 serves as a coordination point for heme b.

The protein belongs to the peroxidase family. Peroxidase/catalase subfamily. As to quaternary structure, homodimer or homotetramer. The cofactor is heme b. Formation of the three residue Trp-Tyr-Met cross-link is important for the catalase, but not the peroxidase activity of the enzyme.

It localises to the cytoplasm. The enzyme catalyses H2O2 + AH2 = A + 2 H2O. It catalyses the reaction 2 H2O2 = O2 + 2 H2O. Functionally, bifunctional enzyme with both catalase and broad-spectrum peroxidase activity. The protein is Catalase-peroxidase of Podospora anserina (strain S / ATCC MYA-4624 / DSM 980 / FGSC 10383) (Pleurage anserina).